Consider the following 91-residue polypeptide: Small ribosomal subunit protein uS17 (91 aa).

It belongs to the universal ribosomal protein uS17 family. As to quaternary structure, part of the 30S ribosomal subunit.

In terms of biological role, one of the primary rRNA binding proteins, it binds specifically to the 5'-end of 16S ribosomal RNA. The sequence is that of Small ribosomal subunit protein uS17 from Saccharopolyspora erythraea (strain ATCC 11635 / DSM 40517 / JCM 4748 / NBRC 13426 / NCIMB 8594 / NRRL 2338).